A 579-amino-acid polypeptide reads, in one-letter code: Salivary alpha-glucosidase (579 aa).

A signal peptide spans 1-18 (MKIFVPLLSFLLAGLTTG). Residues Asp37, Asp39, Asp41, Ile43, Asp45, and Asn118 each contribute to the Ca(2+) site. Residues Asn118 and Asn151 are each glycosylated (N-linked (GlcNAc...) asparagine). Asp189 contributes to the Ca(2+) binding site. Residue Asp219 is the Nucleophile of the active site. 3 residues coordinate Ca(2+): Tyr223, Leu224, and Glu226. N-linked (GlcNAc...) asparagine glycosylation occurs at Asn282. Glu290 functions as the Proton donor in the catalytic mechanism. Residues Asn304, Asn325, and Asn401 are each glycosylated (N-linked (GlcNAc...) asparagine). Asn325 is an N-acetyl-beta-D-glucosamine binding site.

The protein belongs to the glycosyl hydrolase 13 family. In terms of tissue distribution, saliva (at protein level). Proximal lateral lobes of the salivary gland (at protein level).

The protein resides in the secreted. It carries out the reaction Hydrolysis of terminal, non-reducing (1-&gt;4)-linked alpha-D-glucose residues with release of alpha-D-glucose.. Functionally, functions as a glucosidase that shows high activity toward sucrose, a major component of nectar. Assists the mosquito in its sugar-feeding capabilities. In Aedes aegypti (Yellowfever mosquito), this protein is Salivary alpha-glucosidase.